Here is a 367-residue protein sequence, read N- to C-terminus: Phosphoribosylaminoimidazole-succinocarboxamide synthase (367 aa).

The protein belongs to the SAICAR synthetase family.

It carries out the reaction 5-amino-1-(5-phospho-D-ribosyl)imidazole-4-carboxylate + L-aspartate + ATP = (2S)-2-[5-amino-1-(5-phospho-beta-D-ribosyl)imidazole-4-carboxamido]succinate + ADP + phosphate + 2 H(+). It participates in purine metabolism; IMP biosynthesis via de novo pathway; 5-amino-1-(5-phospho-D-ribosyl)imidazole-4-carboxamide from 5-amino-1-(5-phospho-D-ribosyl)imidazole-4-carboxylate: step 1/2. This is Phosphoribosylaminoimidazole-succinocarboxamide synthase from Aliivibrio fischeri (strain ATCC 700601 / ES114) (Vibrio fischeri).